The primary structure comprises 455 residues: 3-isopropylmalate dehydratase large subunit (455 aa).

Cys-336, Cys-396, and Cys-399 together coordinate [4Fe-4S] cluster.

It belongs to the aconitase/IPM isomerase family. LeuC type 1 subfamily. In terms of assembly, heterodimer of LeuC and LeuD. It depends on [4Fe-4S] cluster as a cofactor.

The catalysed reaction is (2R,3S)-3-isopropylmalate = (2S)-2-isopropylmalate. It functions in the pathway amino-acid biosynthesis; L-leucine biosynthesis; L-leucine from 3-methyl-2-oxobutanoate: step 2/4. Its function is as follows. Catalyzes the isomerization between 2-isopropylmalate and 3-isopropylmalate, via the formation of 2-isopropylmaleate. This is 3-isopropylmalate dehydratase large subunit from Staphylococcus aureus (strain MRSA252).